The chain runs to 82 residues: Large ribosomal subunit protein bL27 (82 aa).

The segment at 1-21 is disordered; the sequence is MAHKKGASSSRNGRDSNAKRL.

This sequence belongs to the bacterial ribosomal protein bL27 family.

The protein is Large ribosomal subunit protein bL27 of Tropheryma whipplei (strain Twist) (Whipple's bacillus).